Reading from the N-terminus, the 726-residue chain is Phenylalanine--tRNA ligase beta subunit (726 aa).

The region spanning 38-150 is the tRNA-binding domain; that stretch reads FSSSKGLLFA…NFASLNDDAS (113 aa). Residues 394 to 467 enclose the B5 domain; it reads DKKVEINFDE…RFYNYDNFKE (74 aa). Residues Asp-445, Asp-451, Glu-454, and Glu-455 each coordinate Mg(2+).

This sequence belongs to the phenylalanyl-tRNA synthetase beta subunit family. Type 1 subfamily. Tetramer of two alpha and two beta subunits. Mg(2+) serves as cofactor.

It localises to the cytoplasm. The enzyme catalyses tRNA(Phe) + L-phenylalanine + ATP = L-phenylalanyl-tRNA(Phe) + AMP + diphosphate + H(+). This Mycoplasmopsis synoviae (strain 53) (Mycoplasma synoviae) protein is Phenylalanine--tRNA ligase beta subunit.